We begin with the raw amino-acid sequence, 344 residues long: Fe-S cluster assembly protein DRE2 (344 aa).

Residues 1-160 form an N-terminal SAM-like domain region; it reads MTSNILLLLH…KKLNNDNAST (160 aa). The interval 154 to 179 is disordered; sequence NNDNASTPGLTDSSAGTSEDETATVS. A compositionally biased stretch (polar residues) spans 155 to 170; sequence NDNASTPGLTDSSAGT. The linker stretch occupies residues 161–223; that stretch reads PGLTDSSAGT…NDLIAESNKY (63 aa). Residues C231, C243, C246, and C248 each coordinate [2Fe-2S] cluster. Residues 231–248 form a fe-S binding site A region; that stretch reads CELPNGKKRKKACKDCTC. Residues C313, C316, C324, and C327 each coordinate [4Fe-4S] cluster. Short sequence motifs (cx2C motif) lie at residues 313-316 and 324-327; these read CGSC and CDGC. The interval 313–327 is fe-S binding site B; sequence CGSCSLGDAFRCDGC.

The protein belongs to the anamorsin family. As to quaternary structure, monomer. Interacts with TAH18. Interacts with MIA40. [2Fe-2S] cluster is required as a cofactor. Requires [4Fe-4S] cluster as cofactor.

It localises to the cytoplasm. Its subcellular location is the mitochondrion intermembrane space. Its function is as follows. Component of the cytosolic iron-sulfur (Fe-S) protein assembly (CIA) machinery required for the maturation of extramitochondrial Fe-S proteins. Part of an electron transfer chain functioning in an early step of cytosolic Fe-S biogenesis, facilitating the de novo assembly of a [4Fe-4S] cluster on the scaffold complex CFD1-NBP35. Electrons are transferred to DRE2 from NADPH via the FAD- and FMN-containing protein TAH18. TAH18-DRE2 are also required for the assembly of the diferric tyrosyl radical cofactor of ribonucleotide reductase (RNR), probably by providing electrons for reduction during radical cofactor maturation in the catalytic small subunit RNR2. This Candida tropicalis (strain ATCC MYA-3404 / T1) (Yeast) protein is Fe-S cluster assembly protein DRE2.